The sequence spans 459 residues: Argininosuccinate lyase (459 aa).

It belongs to the lyase 1 family. Argininosuccinate lyase subfamily.

The protein resides in the cytoplasm. The enzyme catalyses 2-(N(omega)-L-arginino)succinate = fumarate + L-arginine. The protein operates within amino-acid biosynthesis; L-arginine biosynthesis; L-arginine from L-ornithine and carbamoyl phosphate: step 3/3. This chain is Argininosuccinate lyase, found in Prochlorococcus marinus subsp. pastoris (strain CCMP1986 / NIES-2087 / MED4).